The primary structure comprises 191 residues: Biogenesis of lysosome-related organelles complex 1 subunit 5 (191 aa).

Residues 1–32 (MSGGGTETPTGCEAPSGGGGGGGRKRDSLGTT) are disordered. S2 is modified (N-acetylserine). A coiled-coil region spans residues 160–191 (QADVDEEHRKAMEKLKEQYAEMEKDLAKFSTF).

Belongs to the BLOC1S5 family. In terms of assembly, component of the biogenesis of lysosome-related organelles complex 1 (BLOC-1) composed of BLOC1S1, BLOC1S2, BLOC1S3, BLOC1S4, BLOC1S5, BLOC1S6, DTNBP1/BLOC1S7 and SNAPIN/BLOC1S8. Octamer composed of one copy each BLOC1S1, BLOC1S2, BLOC1S3, BLOC1S4, BLOC1S5, BLOC1S6, DTNBP1/BLOC1S7 and SNAPIN/BLOC1S8. The BLOC-1 complex associates with the AP-3 protein complex and membrane protein cargos. Interacts with BLOC1S4, BLOC1S6, DTNBP1/BLOC1S7 and PI4K2A.

In terms of biological role, component of the BLOC-1 complex, a complex that is required for normal biogenesis of lysosome-related organelles (LRO), such as platelet dense granules and melanosomes. In concert with the AP-3 complex, the BLOC-1 complex is required to target membrane protein cargos into vesicles assembled at cell bodies for delivery into neurites and nerve terminals. The BLOC-1 complex, in association with SNARE proteins, is also proposed to be involved in neurite extension. Plays a role in intracellular vesicle trafficking. The chain is Biogenesis of lysosome-related organelles complex 1 subunit 5 (BLOC1S5) from Sus scrofa (Pig).